The chain runs to 833 residues: Leucine--tRNA ligase (833 aa).

The 'HIGH' region signature appears at 41–52 (PYPSGAGLHVGH). Positions 610-614 (KMSKS) match the 'KMSKS' region motif. K613 serves as a coordination point for ATP.

It belongs to the class-I aminoacyl-tRNA synthetase family.

It localises to the cytoplasm. The enzyme catalyses tRNA(Leu) + L-leucine + ATP = L-leucyl-tRNA(Leu) + AMP + diphosphate. This chain is Leucine--tRNA ligase, found in Streptococcus pneumoniae (strain Hungary19A-6).